The chain runs to 1693 residues: Non-structural polyprotein pORF1 (1693 aa).

Positions 56 to 240 constitute an Alphavirus-like MT domain; sequence VFRPEVFWNH…HDVSNLRSWI (185 aa). Residues 60–240 form a methyltransferase region; the sequence is EVFWNHPIQR…HDVSNLRSWI (181 aa). A Y-domain region spans residues 241-439; it reads RTTKVTGDHP…FYAQCRRWLS (199 aa). The cysteines at positions 434 and 481 are disulfide-linked. Positions 442-509 are putative protease; the sequence is FHLDPRVLVF…EAYEGSDVDP (68 aa). Residues 510–691 form a zinc-binding region; sequence AESAISDISG…FSPGHVWESA (182 aa). H671, E673, and H686 together coordinate Zn(2+). The segment at 712 to 778 is hinge; it reads SSPARPDLGF…AITHQTARHR (67 aa). A disordered region spans residues 732 to 768; the sequence is ATPTLAAPLPPPAPDPSPPPSAPALAEPASGATAGAP. A compositionally biased stretch (pro residues) spans 739–753; that stretch reads PLPPPAPDPSPPPSA. Residues 754–768 show a composition bias toward low complexity; it reads PALAEPASGATAGAP. Residues 775–921 form the Macro domain; the sequence is ARHRRLLFTY…LYLPELAARW (147 aa). Residues 785–942 are X-domain; it reads PDGSKVFAGS…TITEDVARTA (158 aa). In terms of domain architecture, (+)RNA virus helicase ATP-binding spans 934–1082; the sequence is ITEDVARTAN…RPDLGPTSWW (149 aa). Positions 960–1204 are NTPase/helicase; sequence GCRVTPGVVQ…ISDAIVNNFF (245 aa). Residue 975–982 coordinates ATP; the sequence is GVPGSGKS. The 134-residue stretch at 1083–1216 folds into the (+)RNA virus helicase C-terminal domain; that stretch reads HVTHRWPADV…GGEIGHQRPS (134 aa). Residues 1207 to 1693 are RNA-directed RNA polymerase; sequence GGEIGHQRPS…LTNSILCRVE (487 aa). The RdRp catalytic domain occupies 1454 to 1565; sequence SMVFENDFSE…LCSEYRQSPG (112 aa).

The protein belongs to the hepevirus non-structural polyprotein family. In terms of assembly, the protease domain interacts with host EIF2AK4 (via C-terminus); this interaction inhibits dimerization of EIF2AK4 and prevents EIF2AK4-mediated phosphorylation of host EIF2A. Requires Mg(2+) as cofactor. ORF1 polyprotein does not seem to be processed into distinct enzymatic domains by a viral protease belonging to ORF1, but could be processed by a host serine protease like thrombin.

Its subcellular location is the host cytoplasm. It localises to the host perinuclear region. It catalyses the reaction RNA(n) + a ribonucleoside 5'-triphosphate = RNA(n+1) + diphosphate. It carries out the reaction GTP + S-adenosyl-L-methionine = N(7)-methyl-GTP + S-adenosyl-L-homocysteine. Its activity is regulated as follows. Putative protease: Inhibited by chymostatin. Methyltransferase: Displays a capping enzyme activity. This function is necessary since all viral RNAs are synthesized in the cytoplasm, and host capping enzymes are restricted to the nucleus. The enzymatic reaction involves a covalent link between 7-methyl-GMP and the methyltransferase, whereas eukaryotic capping enzymes form a covalent complex only with GMP. Methyltransferase catalyzes transfer of a methyl group from S-adenosylmethionine to GTP and GDP to yield m(7)GTP or m(7)GDP. GDP is a better substrate than GTP. This enzyme also displays guanylyltransferase activity to form a covalent complex, methyltransferase-m(7)GMP, from which 7-methyl-GMP is transferred to the mRNA to create the cap structure. Its function is as follows. Y-domain: Indispensable for virus replication. Functionally, putative protease: The putative protease domain although necessary for replication of the virus may not be a protease but rather a structural Zn(2+)-binding domain. Inhibits induction of IFN-beta by MDA5 and RIG-I pathways and down-regulates the expression of MDA5. In terms of biological role, NTPase/helicase: Multi-functional protein that exhibits NTPase and RNA unwinding activities. Hydrolyzes all NTPs efficiently and unwinds RNA duplexes containing 5' overhangs. Possesses a sequence independent RNA-5'-triphosphatase (RTPase) activity suggestive of its role in forming viral cap structure. Also participates in viral genome replication, RNA translocation and genome packaging/unpackaging. RNA-directed RNA polymerase: Plays an essential role in the virus replication. Binds to the 3'-end of the genomic RNA to initiate viral replication. The polypeptide is Non-structural polyprotein pORF1 (Homo sapiens (Human)).